The following is a 454-amino-acid chain: Glutamyl-tRNA(Gln) amidotransferase subunit A (454 aa).

Active-site charge relay system residues include K77 and S152. The active-site Acyl-ester intermediate is S176.

It belongs to the amidase family. GatA subfamily. As to quaternary structure, heterotrimer of A, B and C subunits.

It catalyses the reaction L-glutamyl-tRNA(Gln) + L-glutamine + ATP + H2O = L-glutaminyl-tRNA(Gln) + L-glutamate + ADP + phosphate + H(+). In terms of biological role, allows the formation of correctly charged Gln-tRNA(Gln) through the transamidation of misacylated Glu-tRNA(Gln) in organisms which lack glutaminyl-tRNA synthetase. The reaction takes place in the presence of glutamine and ATP through an activated gamma-phospho-Glu-tRNA(Gln). The polypeptide is Glutamyl-tRNA(Gln) amidotransferase subunit A (gatA) (Methanothermobacter thermautotrophicus (strain ATCC 29096 / DSM 1053 / JCM 10044 / NBRC 100330 / Delta H) (Methanobacterium thermoautotrophicum)).